The chain runs to 265 residues: Seminal vesicle secretory protein 3A (265 aa).

An N-terminal signal peptide occupies residues 1 to 20; it reads MKSIFFSLSLLLLLEKKAAG. 5 repeat units span residues 116-119, 122-125, 129-132, 136-139, and 142-145. The tract at residues 116 to 145 is 5 X 4 AA tandem repeats of Q-X-K-[ST]; the sequence is QIKSQTQVKSYAAQLKSQPGQLKTIGQVKS.

Post-translationally, glycosylated. In terms of processing, covalently cross-linked by transglutaminase, which is important for the formation of the gelatinous copulatory plug. Five repeats of Q-X-K-(S/T) in the central region of the protein serve as the transglutaminase substrate site(s). In terms of tissue distribution, highly expressed in the seminal vesicle where it is detected in luminal epithelium of the mucosa folds, and also in luminal fluid (at protein level). Not detected in other tissues tested.

The protein localises to the secreted. Its function is as follows. Component of the copulatory plug. The polypeptide is Seminal vesicle secretory protein 3A (Mus musculus (Mouse)).